A 62-amino-acid polypeptide reads, in one-letter code: MVKGTTSMGKHGRSKTHIRCRRCGRHSFNVAKGYCAACGFGRSKRIRHYNWANKKVNRIRIV.

C20, C23, C35, and C38 together coordinate Zn(2+). The C4-type zinc-finger motif lies at 20 to 38 (CRRCGRHSFNVAKGYCAAC).

Belongs to the eukaryotic ribosomal protein eL37 family. Requires Zn(2+) as cofactor.

Its function is as follows. Binds to the 23S rRNA. This chain is Large ribosomal subunit protein eL37, found in Desulfurococcus amylolyticus (strain DSM 18924 / JCM 16383 / VKM B-2413 / 1221n) (Desulfurococcus kamchatkensis).